The chain runs to 1129 residues: CRISPR-associated endonuclease Cas12b (1129 aa).

Residues 1-14 (MAVKSIKVKLRLDD) form a WED-I (OBD-I) domain region. Residues 4–9 (KSIKVK) are binds sgRNA. The tract at residues 15 to 386 (MPEIRAGLWK…FATFTLPDAT (372 aa)) is REC1 (Helical-1)domain. Binds DNA protospacer adjacent motif (PAM) on target DNA stretches follow at residues 118–122 (QQIAR) and 143–144 (GN). The WED-II (OBD-II) domain stretch occupies residues 387 to 518 (AHPIWTRFDK…QSQSEARGER (132 aa)). The segment at 442-446 (SMSEQ) is binds sgRNA. Residues 519–628 (RPPYAAVFRL…LLKLPGETES (110 aa)) form a ruvC-I domain region. Aspartate 570 serves as the catalytic For DNase activity of RuvC domain. Positions 573–574 (LR) are binds non-target ssDNA. The tract at residues 629–658 (KDLRAIREERQRTLRQLRTQLAYLRLLVRC) is bridge helix domain. The tract at residues 659–784 (GSEDVGRRER…SFFGKVSGQV (126 aa)) is REC2 (Helical-II) domain. Binds sgRNA regions lie at residues 742-746 (RPKIR), 753-754 (VG), 792-796 (RFAIT), 800-819 (HIDH…IIME), and 835-839 (WVAKY). The ruvC-II domain stretch occupies residues 785–900 (IRAEKGSRFA…GTMYAAFSSR (116 aa)). The active-site For DNase activity of RuvC domain is the glutamate 848. The segment at 897–900 (FSSR) is binds non-target ssDNA. The phosphate site is built by serine 899 and arginine 911. The tract at residues 901 to 974 (FDARTGAPGI…SAEEGDFHQI (74 aa)) is nuc-I domain. A binds sgRNA region spans residues 973–978 (QIHADL). A ruvC-III domain region spans residues 975–993 (HADLNAAQNLQQRLWSDFD). The For DNase activity of RuvC domain role is filled by aspartate 977. Residues 994–1129 (ISQIRLRCDW…DSACENTGDI (136 aa)) are nuc-II domain.

It belongs to the CRISPR-associated endonuclease Cas12b family. Monomer. It depends on a divalent metal cation as a cofactor.

Its function is as follows. CRISPR (clustered regularly interspaced short palindromic repeat), is an adaptive immune system that provides protection against mobile genetic elements (viruses, transposable elements and conjugative plasmids). CRISPR clusters contain sequences complementary to antecedent mobile elements and target invading nucleic acids. CRISPR clusters are transcribed and processed into CRISPR RNA (crRNA). In type II CRISPR systems correct processing of pre-crRNA requires a trans-encoded small RNA (tracrRNA), endogenous ribonuclease 3 (rnc) and this protein. The tracrRNA serves as a guide for ribonuclease 3-aided processing of pre-crRNA. Protein-crRNA-tracrRNA endonucleolytically cleave dsDNA target complementary to the spacer; protein is inactive in the absence of crRNA homologous to the target and tracrRNA. Recognizes a short motif in the CRISPR repeat sequences (the 5' PAM or protospacer adjacent motif, TTN in this organism) to help distinguish self versus nonself, as targets within the bacterial CRISPR locus do not have PAMs. PAM recognition is also required for catalytic activity. Cleavage results in staggered 6-8 base 5'-overhangs 14-17 and 23-24 bases downstream of the PAM (protospacer adjacent motif) on the non-target and target strands respectively. Both target and non-target strand DNA are probably independently cleaved in the same active site. The protein is CRISPR-associated endonuclease Cas12b of Alicyclobacillus acidoterrestris (strain ATCC 49025 / DSM 3922 / CIP 106132 / NCIMB 13137 / GD3B).